A 542-amino-acid polypeptide reads, in one-letter code: Homeobox protein ceh-18 (542 aa).

Polar residues predominate over residues 243–252; sequence NTPTQPTASL. Residues 243–264 are disordered; sequence NTPTQPTASLTPKKAENRPPVV. One can recognise a POU-specific domain in the interval 290 to 364; it reads DDRIDMNELE…LLKEWLADVE (75 aa). The homeobox DNA-binding region spans 421 to 480; it reads RRRKRTNLDMNQRNALDTFFALNPRPDHDKMTDIANSLELDRDVVRVWFCNRRQKMRRVD. The interval 514-542 is disordered; that stretch reads LASCQASNDDSDGTSGSPDAPSNDGCSDL. Polar residues predominate over residues 517–530; it reads CQASNDDSDGTSGS.

It belongs to the POU transcription factor family. In terms of assembly, interacts with akir-1. As to expression, expressed in the gonadal sheath cells that signal the oocyte, but not in the oocyte.

The protein localises to the nucleus. Functionally, directs gonadal sheath cell differentiation and function. Also directs gonad migration and plays a role in specifying the differentiated phenotypes of epidermal cells during postembryonic development. Plays a role in oogenesis, regulating a sheath cell signal that causes oocytes to maintain diakinesis arrest during meiosis. Negatively regulates oocyte maturation, ovulation and MAPK activation in oocytes when sperm are not available for fertilization. May be recruited by akir-1 to the promoter regions of antimicrobial peptide genes to control gene expression in response to fungal infection. This is Homeobox protein ceh-18 from Caenorhabditis elegans.